The sequence spans 533 residues: L-aspartate oxidase 1 (533 aa).

Residues 10-13 (SGLA), Lys-32, 39-46 (ASDWAQGG), and Asp-214 contribute to the FAD site. Residue Arg-281 is the Proton donor/acceptor of the active site. FAD is bound by residues Glu-366 and 382-383 (SL).

This sequence belongs to the FAD-dependent oxidoreductase 2 family. NadB subfamily. FAD is required as a cofactor.

The protein localises to the cytoplasm. It carries out the reaction L-aspartate + O2 = iminosuccinate + H2O2. The protein operates within cofactor biosynthesis; NAD(+) biosynthesis; iminoaspartate from L-aspartate (oxidase route): step 1/1. In terms of biological role, catalyzes the oxidation of L-aspartate to iminoaspartate, the first step in the de novo biosynthesis of NAD(+). The protein is L-aspartate oxidase 1 (nadB1) of Ralstonia nicotianae (strain ATCC BAA-1114 / GMI1000) (Ralstonia solanacearum).